Here is a 500-residue protein sequence, read N- to C-terminus: Low-density lipoprotein receptor-related protein 11 (500 aa).

Residues 1–37 form the signal peptide; that stretch reads MASVAQESAGSQRRLPPRHGALRGLLLLCLWLPSGRA. At 38-450 the chain is on the extracellular side; it reads ALPPAAPLSE…GGEHPAPETG (413 aa). In terms of domain architecture, MANSC spans 99–184; sequence AMPDAIIRTK…FALHSGYSSY (86 aa). N164 and N291 each carry an N-linked (GlcNAc...) asparagine glycan. The region spanning 210-305 is the PKD domain; sequence PLSKAGQDVV…VLRAAYSTGG (96 aa). Positions 309–345 constitute an LDL-receptor class A domain; it reads TCSRYHFFCDDGCCIDITLACDGVQQCPDGSDEDFCQ. Cystine bridges form between C310/C322, C317/C335, and C329/C344. The interval 358-445 is disordered; the sequence is AASPALPRTT…KGDGGGGEHP (88 aa). An N-linked (GlcNAc...) asparagine glycan is attached at N401. Residues 451-473 traverse the membrane as a helical segment; the sequence is AVLPLALGLAITALLLLMVACRL. Topologically, residues 474–500 are cytoplasmic; sequence RLVKQKLKKARPITSEESDYLINGMYL. S491 carries the post-translational modification Phosphoserine.

This sequence belongs to the LDLR family.

It localises to the membrane. This Homo sapiens (Human) protein is Low-density lipoprotein receptor-related protein 11 (LRP11).